Consider the following 199-residue polypeptide: Nitrile hydratase subunit alpha (199 aa).

Fe(3+) contacts are provided by Cys-102, Cys-105, Ser-106, and Cys-107. A Cysteine sulfinic acid (-SO2H) modification is found at Cys-105. Position 107 is a cysteine sulfenic acid (-SOH) (Cys-107).

This sequence belongs to the nitrile hydratase subunit alpha family. Heterodimer of an alpha and a beta chain. It depends on Fe(3+) as a cofactor. Oxidation on Cys-105 is essential for the activity. In terms of processing, oxidation on Cys-107 stabilizes the Fe-NO ligand coordinated in the inactive form.

The catalysed reaction is an aliphatic primary amide = an aliphatic nitrile + H2O. With respect to regulation, inactivated by oxidation of Cys-107 to a sulfenic acid. NHase catalyzes the hydration of various nitrile compounds to the corresponding amides. Industrial production of acrylamide is now being developed using some of the enzymes of this class. The polypeptide is Nitrile hydratase subunit alpha (nthA) (Rhodococcus sp).